Here is a 647-residue protein sequence, read N- to C-terminus: Threonine--tRNA ligase (647 aa).

The 61-residue stretch at 1-61 (MINITFPDGA…TEDGSIEIVT (61 aa)) folds into the TGS domain. Positions 242–540 (DHRKLGKELD…LIENYKGAFP (299 aa)) are catalytic. Zn(2+) is bound by residues cysteine 336, histidine 387, and histidine 517.

It belongs to the class-II aminoacyl-tRNA synthetase family. As to quaternary structure, homodimer. The cofactor is Zn(2+).

It is found in the cytoplasm. It carries out the reaction tRNA(Thr) + L-threonine + ATP = L-threonyl-tRNA(Thr) + AMP + diphosphate + H(+). In terms of biological role, catalyzes the attachment of threonine to tRNA(Thr) in a two-step reaction: L-threonine is first activated by ATP to form Thr-AMP and then transferred to the acceptor end of tRNA(Thr). Also edits incorrectly charged L-seryl-tRNA(Thr). The sequence is that of Threonine--tRNA ligase from Streptococcus pneumoniae serotype 2 (strain D39 / NCTC 7466).